We begin with the raw amino-acid sequence, 230 residues long: MAKQTKKQQEVAKLDPEKLYTVDEAIAVLREHKAKFDETVEVAMNLGVDPRHADQMVRGMVSLPSGTGKTVKVAVFAKGDNAEKATAAGADKVGAEDLMEDMQNGNLDYDRVIATPDMMGVVGRLGKVLGPKGLMPNPKLGTVTPNVEQAVKDAKGGQVEFRVEKMGIIHSGIGKMSFKDEDLKANFKSFTDAIVKAKPSGAKGKYVKKVSLTSSMGPGLKIDLAEVEGA.

It belongs to the universal ribosomal protein uL1 family. Part of the 50S ribosomal subunit.

In terms of biological role, binds directly to 23S rRNA. The L1 stalk is quite mobile in the ribosome, and is involved in E site tRNA release. Protein L1 is also a translational repressor protein, it controls the translation of the L11 operon by binding to its mRNA. This chain is Large ribosomal subunit protein uL1, found in Erythrobacter litoralis (strain HTCC2594).